Here is a 100-residue protein sequence, read N- to C-terminus: RNA-binding protein YlxQ (100 aa).

It belongs to the eukaryotic ribosomal protein eL8 family.

In terms of biological role, RNA-binding protein that recognizes the K-turn motif present in ribosomal RNA, but also in box C/D and box C'/D' sRNAs. The sequence is that of RNA-binding protein YlxQ from Bacillus subtilis (strain 168).